Here is a 232-residue protein sequence, read N- to C-terminus: Flagellar L-ring protein (232 aa).

The signal sequence occupies residues 1–21 (MQKYALHAYPVMALMVATLTG). A lipid anchor (N-palmitoyl cysteine) is attached at Cys-22. Cys-22 carries the S-diacylglycerol cysteine lipid modification.

Belongs to the FlgH family. The basal body constitutes a major portion of the flagellar organelle and consists of four rings (L,P,S, and M) mounted on a central rod.

Its subcellular location is the cell outer membrane. The protein resides in the bacterial flagellum basal body. Assembles around the rod to form the L-ring and probably protects the motor/basal body from shearing forces during rotation. This Salmonella gallinarum (strain 287/91 / NCTC 13346) protein is Flagellar L-ring protein.